Here is a 115-residue protein sequence, read N- to C-terminus: Dolichyl-diphosphooligosaccharide--protein glycosyltransferase subunit DAD2 (115 aa).

At 1–31 (MVKSTSKDAQDLFHSLHSAYTATPTNLKIID) the chain is on the cytoplasmic side. A helical membrane pass occupies residues 32-52 (LYVCFAVFTALIQVAYMALVG). Over 53–55 (SFP) the chain is Lumenal. A helical transmembrane segment spans residues 56–76 (FNSFLSGVLSCIGTAVLAVCL). Over 77–94 (RIQVNKENKEFKDLAPER) the chain is Cytoplasmic. The helical transmembrane segment at 95 to 115 (AFADFVLCNLVLHLVIINFLG) threads the bilayer.

It belongs to the DAD/OST2 family. Component of the oligosaccharyltransferase (OST) complex.

It is found in the endoplasmic reticulum membrane. Its pathway is protein modification; protein glycosylation. Its function is as follows. Subunit of the oligosaccharyl transferase (OST) complex that catalyzes the initial transfer of a defined glycan (Glc(3)Man(9)GlcNAc(2) in eukaryotes) from the lipid carrier dolichol-pyrophosphate to an asparagine residue within an Asn-X-Ser/Thr consensus motif in nascent polypeptide chains, the first step in protein N-glycosylation. N-glycosylation occurs cotranslationally and the complex associates with the Sec61 complex at the channel-forming translocon complex that mediates protein translocation across the endoplasmic reticulum (ER). All subunits are required for a maximal enzyme activity. The sequence is that of Dolichyl-diphosphooligosaccharide--protein glycosyltransferase subunit DAD2 (DAD2) from Arabidopsis thaliana (Mouse-ear cress).